A 211-amino-acid chain; its full sequence is MRDPVETYMNLVPMVVEQTNRGERAYDIFSRLLKERIIFLTGPVEDGMSTLVVAQLLFLEAENPKKEISMYINSPGGVVTSGLAIYDTMQFIRPPVSTLCTGQAASMGSLLLAAGEKDMRFSLPNARIMVHQPSGGFQGQATDIMLHAQEILNLKKRLNEIYVKHTGQTYKTIEDALERDKFLTANDAKEFGLVDRVIDKRAEEPAAAKTQ.

Ser106 serves as the catalytic Nucleophile. Residue His131 is part of the active site.

It belongs to the peptidase S14 family. Fourteen ClpP subunits assemble into 2 heptameric rings which stack back to back to give a disk-like structure with a central cavity, resembling the structure of eukaryotic proteasomes.

Its subcellular location is the cytoplasm. It catalyses the reaction Hydrolysis of proteins to small peptides in the presence of ATP and magnesium. alpha-casein is the usual test substrate. In the absence of ATP, only oligopeptides shorter than five residues are hydrolyzed (such as succinyl-Leu-Tyr-|-NHMec, and Leu-Tyr-Leu-|-Tyr-Trp, in which cleavage of the -Tyr-|-Leu- and -Tyr-|-Trp bonds also occurs).. Its function is as follows. Cleaves peptides in various proteins in a process that requires ATP hydrolysis. Has a chymotrypsin-like activity. Plays a major role in the degradation of misfolded proteins. The sequence is that of ATP-dependent Clp protease proteolytic subunit 2 from Bradyrhizobium diazoefficiens (strain JCM 10833 / BCRC 13528 / IAM 13628 / NBRC 14792 / USDA 110).